Reading from the N-terminus, the 80-residue chain is MGMRMMFTVFLLVVLATTVVSIPSDRASDGRNAAVNERQTWLVPSTITTCCGYDPGTMCPTCMCDNTCKPKPKKSGRRND.

Residues 1–21 (MGMRMMFTVFLLVVLATTVVS) form the signal peptide. A propeptide spanning residues 22-38 (IPSDRASDGRNAAVNER) is cleaved from the precursor. Residue Gln-39 is modified to Pyrrolidone carboxylic acid. Ser-45 carries O-linked (HexNAc...) serine glycosylation. Pro-55, Pro-60, Pro-70, and Pro-72 each carry 4-hydroxyproline. A Serine amide modification is found at Ser-75. Positions 76-80 (GRRND) are excised as a propeptide.

It belongs to the conotoxin A superfamily. Post-translationally, contains 3 disulfide bonds. As to expression, expressed by the venom duct.

It is found in the secreted. Functionally, neurotoxin with probable activity on sodium channel. Induces intense repetitive firing of the frog neuromuscular junction, leading to a tetanic contracture in muscle fiber (spastic paralysis). In vivo, shows the same effect as the whole venom when injected on fish prey. This Conus stercusmuscarum (Fly-specked cone) protein is Conotoxin SmIVA.